The primary structure comprises 299 residues: Polyamine aminopropyltransferase (299 aa).

Residues 6–252 (IVLLFALLCT…SLPNQQALQQ (247 aa)) enclose the PABS domain. S-methyl-5'-thioadenosine-binding positions include Gln-36, Glu-120, and 147-148 (DA). Asp-168 serves as the catalytic Proton acceptor.

Belongs to the spermidine/spermine synthase family. Homodimer or homotetramer.

The protein localises to the cytoplasm. It carries out the reaction S-adenosyl 3-(methylsulfanyl)propylamine + putrescine = S-methyl-5'-thioadenosine + spermidine + H(+). It functions in the pathway amine and polyamine biosynthesis; spermidine biosynthesis; spermidine from putrescine: step 1/1. Functionally, catalyzes the irreversible transfer of a propylamine group from the amino donor S-adenosylmethioninamine (decarboxy-AdoMet) to putrescine (1,4-diaminobutane) to yield spermidine. This is Polyamine aminopropyltransferase from Vibrio vulnificus (strain CMCP6).